The primary structure comprises 719 residues: Phenylalanine--tRNA ligase beta subunit, chloroplastic (719 aa).

Residues 318-403 (DHALNINLSI…RIYGYHKFRS (86 aa)) enclose the B5 domain. Mg(2+) is bound by residues Asp381, Asp387, Glu390, and Glu391. The 94-residue stretch at 625–718 (SKYPSIIRDL…IVKQLNLKIR (94 aa)) folds into the FDX-ACB domain.

Belongs to the phenylalanyl-tRNA synthetase beta subunit family. Type 1 subfamily. In terms of assembly, tetramer of two alpha and two beta subunits. The cofactor is Mg(2+).

The protein resides in the plastid. The protein localises to the chloroplast. The enzyme catalyses tRNA(Phe) + L-phenylalanine + ATP = L-phenylalanyl-tRNA(Phe) + AMP + diphosphate + H(+). The sequence is that of Phenylalanine--tRNA ligase beta subunit, chloroplastic from Pyropia yezoensis (Susabi-nori).